Here is a 355-residue protein sequence, read N- to C-terminus: Aurora kinase (355 aa).

The Protein kinase domain maps to 89–340 (FEIGKPLGKG…LEQVMRHPWI (252 aa)). ATP-binding positions include 95–103 (LGKGKFGRV) and Lys118. Asp212 (proton acceptor) is an active-site residue.

Belongs to the protein kinase superfamily. Ser/Thr protein kinase family. Aurora subfamily. Component of the CPC complex at least composed of ark1, bir1 and pic1. Interacts with the mitotic checkpoint complex (MCC) subunit mad3.

It is found in the nucleus. The protein localises to the cytoplasm. The protein resides in the cytoskeleton. It localises to the spindle. The catalysed reaction is L-seryl-[protein] + ATP = O-phospho-L-seryl-[protein] + ADP + H(+). It catalyses the reaction L-threonyl-[protein] + ATP = O-phospho-L-threonyl-[protein] + ADP + H(+). Functionally, component of the chromosomal passenger complex (CPC), a complex that acts as a key regulator of chromosome segregation and cytokinesis. Has a role in error-correction of aberrent kinetochore-microtubule attachments to ensure that sister kinetochores become bioriented and connect to opposite poles by promoting spindle assembly checkpoint signaling. Ark1 is also required for phosphorylation of histone H3 that accompanies chromosome condensation and condensin recruitment to mitotic chromatin. The sequence is that of Aurora kinase (ark1) from Schizosaccharomyces pombe (strain 972 / ATCC 24843) (Fission yeast).